A 117-amino-acid polypeptide reads, in one-letter code: Small ribosomal subunit protein bS6 (117 aa).

The tract at residues 96 to 117 (HAEGPSVQMQKRDERDNRRERR) is disordered. A compositionally biased stretch (basic and acidic residues) spans 105 to 117 (QKRDERDNRRERR).

It belongs to the bacterial ribosomal protein bS6 family.

Functionally, binds together with bS18 to 16S ribosomal RNA. This is Small ribosomal subunit protein bS6 from Ruegeria sp. (strain TM1040) (Silicibacter sp.).